The sequence spans 369 residues: Erythronate-4-phosphate dehydrogenase (369 aa).

Residues serine 45 and threonine 66 each coordinate substrate. Aspartate 146 lines the NAD(+) pocket. The active site involves arginine 209. Position 233 (aspartate 233) interacts with NAD(+). The active site involves glutamate 238. Residue histidine 255 is the Proton donor of the active site. Glycine 258 serves as a coordination point for NAD(+).

Belongs to the D-isomer specific 2-hydroxyacid dehydrogenase family. PdxB subfamily. Homodimer.

It is found in the cytoplasm. It catalyses the reaction 4-phospho-D-erythronate + NAD(+) = (R)-3-hydroxy-2-oxo-4-phosphooxybutanoate + NADH + H(+). Its pathway is cofactor biosynthesis; pyridoxine 5'-phosphate biosynthesis; pyridoxine 5'-phosphate from D-erythrose 4-phosphate: step 2/5. Its function is as follows. Catalyzes the oxidation of erythronate-4-phosphate to 3-hydroxy-2-oxo-4-phosphonooxybutanoate. The polypeptide is Erythronate-4-phosphate dehydrogenase (Porphyromonas gingivalis (strain ATCC BAA-308 / W83)).